The following is a 1396-amino-acid chain: MTTVSCPANVITTTESDRIAGLFNIPAGIIPTGNVLSTIEVCAHRCIFDFFKQIRSDDNSLYSAQFDILLGTYCNTLNFVRFLELGLSVACICTKFPELAYVRDGVIQFEVQQPMIARDGPHPVDQPVHNYMVKRIHKRSLSAAFAIASEALSLLSNTYVDGTEIDSSLRIRAIQQMARNLRTVLDSFERGTADQLLGVLLEKAPPLSLLSPINKFQPEGHLNRVARAALLSDLKRRVCADMFFMTRHAREPRLISAYLSDMVSCTQPSVMVSRITHTNTRGRQVDGVLVTTATLKRQLLQGILQIDDTAADVPVTYGEMVLQGTNLVTALVMGKAVRGMDDVARHLLDITDPNTLNIPSIPPQSNSDSTTAGLPVNARVPADLVIVGDKLVFLEALERRVYQATRVAYPLIGNIDITFIMPMGVFQANSMDRYTRHAGDFSTVSEQDPRQFPPQGIFFYNKDGILTQLTLRDAMGTICHSSLLDVEATLVALRQQHLDRQCYFGVYVAEGTEDTLDVQMGRFMETWADMMPHHPHWVNEHLTILQFIAPSNPRLRFELNPAFDFFVAPGDVDLPGPQRPPEAMPTVNATLRIINGNIPVPLCPISFRDCRGTQLGLGRHTMTPATIKAVKDTFEDRAYPTIFYMLEAVIHGNERNFCALLRLLTQCIRGYWEQSHRVAFVNNFHMLMYITTYLGNGELPEVCINIYRDLLQHVRALRQTITDFTIQGEGHNGETSEALNNILTDDTFIAPILWDCDALIYRDEAARDRLPAIRVSGRNGYQALHFVDMAGHNFQRRDNVLIHGRPVRGDTGQGIPITPHHDREWGILSKIYYYIVIPAFSRGSCCTMGVRYDRLYPALQAVIVPEIPADEEAPTTPEDPRHPLHAHQLVPNSLNVYFHNAHLTVDGDALLTLQELMGDMAERTTAILVSSAPDAGAATATTRNMRIYDGALYHGLIMMAYQAYDETIATGTFFYPVPVNPLFACPEHLASLRGMTNARRVLAKMVPPIPPFLGANHHATIRQPVAYHVTHSKSDFNTLTYSLLGGYFKFTPISLTHQLRTGFHPGIAFTVVRQDRFATEQLLYAERASESYFVGQIQVHHHDAIGGVNFTLTQPRAHVDLGVGYTAVCATAALRCPLTDMGNTAQNLFFSRGGVPMLHDNVTESLRRITASGGRLNPTEPLPIFGGLRPATSAGIARGQASVCEFVAMPVSTDLQYFRTACNPRGRASGMLYMGDRDADIEAIMFDHTQSDVAYTDRATLNPWASQKHSYGDRLYNGTYNLTGASPIYSPCFKFFTPAEVNTNCNTLDRLLMEAKAVASQSSTDTEYQFKRPPGSTEMTQDPCGLFQEAYPPLCSSDAAMLRTAHAGETGADEVHLAQYLIRDASPLRGCLPLPR.

It belongs to the herpesviridae major capsid protein family. In terms of assembly, homomultimer. Makes the hexons and eleven out of twelve pentons. Interacts with triplex proteins 1/TRX1 and 2/TRX2; adjacent capsomers are linked together in groups of three by triplexes, heterotrimeric complexes composed of one molecule of TRX1 and two molecules of TRX2. Interacts with scaffold protein; this interaction allows efficient MCP transport to the host nucleus. Interacts with capsid vertex component 2/CVC2. Interacts with the small capsomere-interacting protein/SCP.

The protein resides in the virion. It localises to the host nucleus. Functionally, self-assembles to form an icosahedral capsid with a T=16 symmetry, about 200 nm in diameter, and consisting of 150 hexons and 12 pentons (total of 162 capsomers). Hexons form the edges and faces of the capsid and are each composed of six MCP molecules. In contrast, one penton is found at each of the 12 vertices. Eleven of the pentons are MCP pentamers, while the last vertex is occupied by the portal complex. The capsid is surrounded by a layer of proteinaceous material designated the tegument which, in turn, is enclosed in an envelope of host cell-derived lipids containing virus-encoded glycoproteins. The chain is Major capsid protein from Varicella-zoster virus (strain Dumas) (HHV-3).